A 79-amino-acid chain; its full sequence is Sulfur carrier protein TusA (79 aa).

Cysteine 17 (cysteine persulfide intermediate) is an active-site residue.

The protein belongs to the sulfur carrier protein TusA family.

The protein localises to the cytoplasm. Functionally, sulfur carrier protein which probably makes part of a sulfur-relay system. This Actinobacillus succinogenes (strain ATCC 55618 / DSM 22257 / CCUG 43843 / 130Z) protein is Sulfur carrier protein TusA.